The sequence spans 333 residues: 2-haloacrylate reductase (333 aa).

153-159 (AAAGGMG) is an NADP(+) binding site.

It belongs to the zinc-containing alcohol dehydrogenase family.

The catalysed reaction is (S)-2-chloropropanoate + NADP(+) = 2-chloroacrylate + NADPH + H(+). Functionally, involved in the degradation of unsaturated organohalogen compounds. Catalyzes the NADPH-dependent reduction of the carbon-carbon double bond of 2-chloroacrylate to produce (S)-2-chloropropionate, which is probably further metabolized to (R)-lactate by (S)-2-haloacid dehalogenase. Can also use 2-bromoacrylate as substrate. Does not act on acrylate, methacrylate, 1,4-benzoquinone and 1,4-naphthoquinone. The chain is 2-haloacrylate reductase from Burkholderia sp.